The chain runs to 596 residues: Pentatricopeptide repeat-containing protein At5g38730 (596 aa).

PPR repeat units lie at residues 132-166 (VSHV…GLKP), 167-201 (HLQA…GVVA), 202-236 (NIHV…GVFP), 237-271 (DIFT…GVAP), 272-302 (NIVT…IKDD), 306-340 (NHVT…GFSP), 341-375 (GVVT…KIEP), 376-410 (DNIT…GLKL), 411-445 (DMYS…GFSP), 446-480 (GYAT…GLCA), 481-515 (DVAL…GLVG), and 516-550 (DSVI…RLMV).

It belongs to the PPR family. P subfamily.

The chain is Pentatricopeptide repeat-containing protein At5g38730 from Arabidopsis thaliana (Mouse-ear cress).